A 227-amino-acid polypeptide reads, in one-letter code: MAYPMQLGFQDATSPIMEELLHFHDHTLMIVFLISSLVLYIISLMLTTKLTHTSTMDAQEVETIWTILPAIILILIALPSLRILYMMDEINNPSLTVKTMGHQWYWSYEYTDYEDLSFDSYMIPTSELKPGELRLLEVDNRVVLPMEMTIRMLVSSEDVLHSWAVPSLGLKTDAIPGRLNQTTLMSSRPGLYYGQCSEICGSNHSFMPIVLELVPLKYFEKWSASML.

Residue M1 is modified to N-formylmethionine. The Mitochondrial intermembrane portion of the chain corresponds to M1–S14. A helical transmembrane segment spans residues P15 to M45. At L46–Q59 the chain is on the mitochondrial matrix side. Residues E60–M87 traverse the membrane as a helical segment. Topologically, residues D88 to L227 are mitochondrial intermembrane. H161, C196, E198, C200, H204, and M207 together coordinate Cu cation. Residue E198 coordinates Mg(2+). Y218 is subject to Phosphotyrosine.

This sequence belongs to the cytochrome c oxidase subunit 2 family. Component of the cytochrome c oxidase (complex IV, CIV), a multisubunit enzyme composed of 14 subunits. The complex is composed of a catalytic core of 3 subunits MT-CO1, MT-CO2 and MT-CO3, encoded in the mitochondrial DNA, and 11 supernumerary subunits COX4I, COX5A, COX5B, COX6A, COX6B, COX6C, COX7A, COX7B, COX7C, COX8 and NDUFA4, which are encoded in the nuclear genome. The complex exists as a monomer or a dimer and forms supercomplexes (SCs) in the inner mitochondrial membrane with NADH-ubiquinone oxidoreductase (complex I, CI) and ubiquinol-cytochrome c oxidoreductase (cytochrome b-c1 complex, complex III, CIII), resulting in different assemblies (supercomplex SCI(1)III(2)IV(1) and megacomplex MCI(2)III(2)IV(2)). Found in a complex with TMEM177, COA6, COX18, COX20, SCO1 and SCO2. Interacts with TMEM177 in a COX20-dependent manner. Interacts with COX20. Interacts with COX16. The cofactor is Cu cation.

It is found in the mitochondrion inner membrane. The enzyme catalyses 4 Fe(II)-[cytochrome c] + O2 + 8 H(+)(in) = 4 Fe(III)-[cytochrome c] + 2 H2O + 4 H(+)(out). Functionally, component of the cytochrome c oxidase, the last enzyme in the mitochondrial electron transport chain which drives oxidative phosphorylation. The respiratory chain contains 3 multisubunit complexes succinate dehydrogenase (complex II, CII), ubiquinol-cytochrome c oxidoreductase (cytochrome b-c1 complex, complex III, CIII) and cytochrome c oxidase (complex IV, CIV), that cooperate to transfer electrons derived from NADH and succinate to molecular oxygen, creating an electrochemical gradient over the inner membrane that drives transmembrane transport and the ATP synthase. Cytochrome c oxidase is the component of the respiratory chain that catalyzes the reduction of oxygen to water. Electrons originating from reduced cytochrome c in the intermembrane space (IMS) are transferred via the dinuclear copper A center (CU(A)) of subunit 2 and heme A of subunit 1 to the active site in subunit 1, a binuclear center (BNC) formed by heme A3 and copper B (CU(B)). The BNC reduces molecular oxygen to 2 water molecules using 4 electrons from cytochrome c in the IMS and 4 protons from the mitochondrial matrix. The sequence is that of Cytochrome c oxidase subunit 2 (MT-CO2) from Bos indicus (Zebu).